Consider the following 486-residue polypeptide: Cysteine--tRNA ligase (486 aa).

Cysteine 29 serves as a coordination point for Zn(2+). The short motif at 31–41 is the 'HIGH' region element; that stretch reads VTVYDYCHLGH. 3 residues coordinate Zn(2+): cysteine 214, histidine 239, and glutamate 243. A 'KMSKS' region motif is present at residues 271–275; the sequence is KMSKS. ATP is bound at residue lysine 274.

Belongs to the class-I aminoacyl-tRNA synthetase family. In terms of assembly, monomer. It depends on Zn(2+) as a cofactor.

The protein localises to the cytoplasm. It carries out the reaction tRNA(Cys) + L-cysteine + ATP = L-cysteinyl-tRNA(Cys) + AMP + diphosphate. The sequence is that of Cysteine--tRNA ligase from Trichormus variabilis (strain ATCC 29413 / PCC 7937) (Anabaena variabilis).